Here is a 194-residue protein sequence, read N- to C-terminus: dCTP deaminase (194 aa).

Residues 110 to 115 (RSSLAR), Asp128, 136 to 138 (VLE), Tyr171, Lys178, and Gln182 each bind dCTP. Glu138 serves as the catalytic Proton donor/acceptor.

It belongs to the dCTP deaminase family. Homotrimer.

The catalysed reaction is dCTP + H2O + H(+) = dUTP + NH4(+). It participates in pyrimidine metabolism; dUMP biosynthesis; dUMP from dCTP (dUTP route): step 1/2. Catalyzes the deamination of dCTP to dUTP. The sequence is that of dCTP deaminase from Pasteurella multocida (strain Pm70).